We begin with the raw amino-acid sequence, 586 residues long: MKENETLKQIVLKTLEESVNSLISSFPEVEKETFKIKIEYSRDEKFGDYSTSFALENSKLLKRNPIQVSKELVEILQKRTDLFEKVDFTPPGFVNFRISTSFLLNYIETSVLSGNYFPKVDLPLKINLEFVSANPTGPLNIVSARAAANGDTMASLLKAIGHNVDKEFYINDYGNQVFLLGVSTLVRIRELKGEEGTQQETTDDTPIEIILEKNILPAEGYRGEYIKDIASSLLKDPKKNVTIENLLKQKKYKELAELCAVWTIENNLIWQRKDLDAFGVEFDRYFSERTLHEADKVLSVMKDLEKSGKIFQEDGKKVFRSTEYGDDKDRVVVRDDGRPTYLLADIAYHKDKIERGYDKIYDIWGPDHHGYISRLSGAVQSLGYKKENFKVIISQQVNLLESGQKVKMSKRAGSFQTMSDLIGFLGKHGKDVGRYFFVMRSLDAPLDFDLDLAKDESDKNPVFYLQYAHARICSIFKEVGDQTSKEATAILEMSEERKRLLFWIARFPEEIFDSANAMEPHRVTNYLQSFAKAFTSFYLAKDNRLKDASKEVRLGLARICLAAKNVLAEGLKLIGVSAPERMEKEN.

Positions 133–143 match the 'HIGH' region motif; sequence ANPTGPLNIVS.

Belongs to the class-I aminoacyl-tRNA synthetase family. Monomer.

It is found in the cytoplasm. It catalyses the reaction tRNA(Arg) + L-arginine + ATP = L-arginyl-tRNA(Arg) + AMP + diphosphate. This Leptospira interrogans serogroup Icterohaemorrhagiae serovar Lai (strain 56601) protein is Arginine--tRNA ligase.